A 258-amino-acid chain; its full sequence is tRNA pseudouridine synthase A (258 aa).

Residue Asp52 is the Nucleophile of the active site. Tyr110 is a binding site for substrate.

It belongs to the tRNA pseudouridine synthase TruA family. In terms of assembly, homodimer.

The enzyme catalyses uridine(38/39/40) in tRNA = pseudouridine(38/39/40) in tRNA. In terms of biological role, formation of pseudouridine at positions 38, 39 and 40 in the anticodon stem and loop of transfer RNAs. The sequence is that of tRNA pseudouridine synthase A from Francisella philomiragia subsp. philomiragia (strain ATCC 25017 / CCUG 19701 / FSC 153 / O#319-036).